The following is a 296-amino-acid chain: GTPase Era (296 aa).

One can recognise an Era-type G domain in the interval 7–174; the sequence is RTGFVAIVGR…LEEIAQRLPE (168 aa). Residues 15-22 are G1; it reads GRPNVGKS. 15 to 22 provides a ligand contact to GTP; it reads GRPNVGKS. A G2 region spans residues 41-45; it reads QTTRH. The tract at residues 62–65 is G3; sequence DTPG. GTP contacts are provided by residues 62–66 and 123–126; these read DTPGF and SKID. Positions 123-126 are G4; the sequence is SKID. A G5 region spans residues 153–155; sequence VSA. Positions 197–281 constitute a KH type-2 domain; that stretch reads VREKIFRLVG…HLEVYIKVRK (85 aa).

Belongs to the TRAFAC class TrmE-Era-EngA-EngB-Septin-like GTPase superfamily. Era GTPase family. In terms of assembly, monomer.

It localises to the cytoplasm. Its subcellular location is the cell inner membrane. Its function is as follows. An essential GTPase that binds both GDP and GTP, with rapid nucleotide exchange. Plays a role in 16S rRNA processing and 30S ribosomal subunit biogenesis and possibly also in cell cycle regulation and energy metabolism. The sequence is that of GTPase Era from Bordetella avium (strain 197N).